Here is a 529-residue protein sequence, read N- to C-terminus: Cytochrome P450 monooxygenase CLM2 (529 aa).

The helical transmembrane segment at 2–19 threads the bilayer; sequence LLIIVVLVGTLIYFLSFH. N-linked (GlcNAc...) asparagine glycosylation is found at N244 and N281. Position 438 (C438) interacts with heme.

The protein belongs to the cytochrome P450 family. Requires heme as cofactor.

The protein localises to the membrane. It carries out the reaction (-)-longiborneol + reduced [NADPH--hemoprotein reductase] + O2 = culmorin + oxidized [NADPH--hemoprotein reductase] + H2O + H(+). It participates in mycotoxin biosynthesis. Functionally, cytochrome P450 monooxygenase involved in the biosynthesis of culmorin, a tricyclic sesquiterpene diol reported to have antifungal activity and some phytotoxicity to wheat coleoptile tissue, contributing to Fusarium head blight disease. The terpene cyclase CLM1 is responsible for the cyclization of farnesyl diphosphate into the intermediate longiborneol. Longiborneol is then hydroxylated in a regio- and endo-stereoselective manner at position C-11 by the cytochrome P450 monooxygenase CLM2 to produce culmorin. Additional non-specific oxygenases are also able to hydroxylate longiborneol at other sites than C-11 leading to 3-hydroxylongiborneol, 5-hydroxylongiborneol, 12-hydroxylongiborneol and 15-hydroxylongiborneol. Moreover, another oxygenase capable of installing a C-11 exo-hydroxy group in longiborneol can also yield 11-epi-acetylculmorin. The production of these longiborneol derivatives is dwarfed by the high abundance of culmorin, suggesting that CLM2 displays superior enzymatic activity to the unidentified, possibly promiscuous, additional oxygenases. The protein is Cytochrome P450 monooxygenase CLM2 of Gibberella zeae (strain ATCC MYA-4620 / CBS 123657 / FGSC 9075 / NRRL 31084 / PH-1) (Wheat head blight fungus).